The following is a 364-amino-acid chain: 3-isopropylmalate dehydrogenase (364 aa).

An NAD(+)-binding site is contributed by 76-89 (GPKWEKLPPNEQPE). Residues Arg97, Arg107, Arg136, and Asp225 each contribute to the substrate site. Positions 225, 249, and 253 each coordinate Mg(2+). 283–295 (GSAPDIAGKGIAN) contributes to the NAD(+) binding site.

The protein belongs to the isocitrate and isopropylmalate dehydrogenases family. LeuB type 1 subfamily. As to quaternary structure, homodimer. The cofactor is Mg(2+). It depends on Mn(2+) as a cofactor.

The protein resides in the cytoplasm. The enzyme catalyses (2R,3S)-3-isopropylmalate + NAD(+) = 4-methyl-2-oxopentanoate + CO2 + NADH. It functions in the pathway amino-acid biosynthesis; L-leucine biosynthesis; L-leucine from 3-methyl-2-oxobutanoate: step 3/4. Catalyzes the oxidation of 3-carboxy-2-hydroxy-4-methylpentanoate (3-isopropylmalate) to 3-carboxy-4-methyl-2-oxopentanoate. The product decarboxylates to 4-methyl-2 oxopentanoate. This Shewanella oneidensis (strain ATCC 700550 / JCM 31522 / CIP 106686 / LMG 19005 / NCIMB 14063 / MR-1) protein is 3-isopropylmalate dehydrogenase.